Here is a 167-residue protein sequence, read N- to C-terminus: Biogenesis of lysosome-related organelles complex 1 subunit 6 (167 aa).

The span at 1–11 (MLKSSNINSVL) shows a compositional bias: polar residues. The tract at residues 1 to 38 (MLKSSNINSVLNELPNDPARDSTAQSSHNGKPKQDAET) is disordered. Residues 102–160 (ARLNDMMSDVKRYKDKLTKIKKEMQGVYQRTKELKKRAANVAACKQRDYQRKLERLQHE) are a coiled coil.

Belongs to the BLOC1S6 family. Component of the biogenesis of lysosome-related organelles complex-1 (BLOC-1) composed of Blos1, Blos2, Blos3, Blos4, Dysb, Muted, Pldn and Snapin. Interacts with Blos1, Blos4 and Dysb.

The protein resides in the synapse. It is found in the cytoplasm. The protein localises to the cytoskeleton. Its subcellular location is the myofibril. It localises to the sarcomere. The protein resides in the z line. In terms of biological role, component of the biogenesis of lysosome-related organelles complex-1 (BLOC-1) involved in pigment granule biogenesis and membrane trafficking in synapses. In response to high synaptic activity at neuromuscular junctions, plays a key role in promoting efficient synaptic vesicle recycling and re-formation through early endosomes. In Drosophila melanogaster (Fruit fly), this protein is Biogenesis of lysosome-related organelles complex 1 subunit 6.